The following is a 375-amino-acid chain: Pectate lyase C (375 aa).

Residues 1 to 22 (MKSLITPITAGLLLALSQPLLA) form the signal peptide. Cys94 and Cys177 are joined by a disulfide. Ca(2+)-binding residues include Asp151, Asp153, Glu188, and Asp192. Residue Arg240 is part of the active site. Cysteines 351 and 374 form a disulfide.

The protein belongs to the polysaccharide lyase 1 family. PLADES subfamily. The cofactor is Ca(2+).

The protein resides in the secreted. The enzyme catalyses Eliminative cleavage of (1-&gt;4)-alpha-D-galacturonan to give oligosaccharides with 4-deoxy-alpha-D-galact-4-enuronosyl groups at their non-reducing ends.. Its pathway is glycan metabolism; pectin degradation; 2-dehydro-3-deoxy-D-gluconate from pectin: step 2/5. Its function is as follows. Involved in maceration and soft-rotting of plant tissue. This Dickeya chrysanthemi (Pectobacterium chrysanthemi) protein is Pectate lyase C.